The chain runs to 346 residues: Dihydroorotase (346 aa).

Zn(2+) contacts are provided by His17 and His19. Residues 19-21 and Asn45 each bind substrate; that span reads HVR. Zn(2+)-binding residues include Lys102, His139, and His177. Position 102 is an N6-carboxylysine (Lys102). His139 serves as a coordination point for substrate. Position 222 (Leu222) interacts with substrate. Asp250 provides a ligand contact to Zn(2+). Asp250 is a catalytic residue. Residues His254 and Ala266 each coordinate substrate.

The protein belongs to the metallo-dependent hydrolases superfamily. DHOase family. Class II DHOase subfamily. Homodimer. Zn(2+) is required as a cofactor.

The enzyme catalyses (S)-dihydroorotate + H2O = N-carbamoyl-L-aspartate + H(+). It participates in pyrimidine metabolism; UMP biosynthesis via de novo pathway; (S)-dihydroorotate from bicarbonate: step 3/3. In terms of biological role, catalyzes the reversible cyclization of carbamoyl aspartate to dihydroorotate. The sequence is that of Dihydroorotase from Delftia acidovorans (strain DSM 14801 / SPH-1).